A 438-amino-acid polypeptide reads, in one-letter code: 3-phosphoshikimate 1-carboxyvinyltransferase (438 aa).

3-phosphoshikimate is bound by residues Lys21, Ser22, and Arg26. Lys21 contributes to the phosphoenolpyruvate binding site. Residues Gly93 and Arg121 each contribute to the phosphoenolpyruvate site. Residues Ser166, Ser167, Gln168, Ser194, Asp324, and Lys351 each coordinate 3-phosphoshikimate. Gln168 lines the phosphoenolpyruvate pocket. Residue Asp324 is the Proton acceptor of the active site. Phosphoenolpyruvate is bound by residues Arg355 and Arg395.

Belongs to the EPSP synthase family. As to quaternary structure, monomer.

The protein resides in the cytoplasm. The enzyme catalyses 3-phosphoshikimate + phosphoenolpyruvate = 5-O-(1-carboxyvinyl)-3-phosphoshikimate + phosphate. It functions in the pathway metabolic intermediate biosynthesis; chorismate biosynthesis. Catalyzes the transfer of the enolpyruvyl moiety of phosphoenolpyruvate (PEP) to the 5-hydroxyl of shikimate-3-phosphate (S3P) to produce enolpyruvyl shikimate-3-phosphate and inorganic phosphate. This Methanobrevibacter smithii (strain ATCC 35061 / DSM 861 / OCM 144 / PS) protein is 3-phosphoshikimate 1-carboxyvinyltransferase.